Consider the following 261-residue polypeptide: MLEALLLGVVEGLTEFLPISSTAHLMLIGDMLGFEGPPGKTYEIVVQLGAILAVCVVFRQRLWGVATTITQPRSFAFARNVMVAFLPAAVIGATLYKYIKQMLESPLVAAIALVVGGVAILVIERLVKRARIHDIEDMSPALALGVGFCQVLAMVPGVSRAGATIMGSMLLGLDRRAAAEFSFFLAIPTMCGASAYSLYKNWATLSFDGAGLIALGFVAAFLSALVVVKGFIGFVGRHGFAPFAWYRIAFGSLMAVLILMR.

Transmembrane regions (helical) follow at residues 1–21 (MLEA…PISS), 38–58 (PGKT…CVVF), 75–95 (FAFA…GATL), 103–123 (LESP…ILVI), 138–158 (MSPA…VPGV), 178–198 (AAEF…AYSL), 212–232 (LIAL…KGFI), and 240–260 (FAPF…LILM).

The protein belongs to the UppP family.

It localises to the cell inner membrane. It carries out the reaction di-trans,octa-cis-undecaprenyl diphosphate + H2O = di-trans,octa-cis-undecaprenyl phosphate + phosphate + H(+). In terms of biological role, catalyzes the dephosphorylation of undecaprenyl diphosphate (UPP). Confers resistance to bacitracin. This is Undecaprenyl-diphosphatase 2 from Paramagnetospirillum magneticum (strain ATCC 700264 / AMB-1) (Magnetospirillum magneticum).